The sequence spans 112 residues: ATP synthase epsilon chain (112 aa).

The protein belongs to the ATPase epsilon chain family. As to quaternary structure, F-type ATPases have 2 components, CF(1) - the catalytic core - and CF(0) - the membrane proton channel. CF(1) has five subunits: alpha(3), beta(3), gamma(1), delta(1), epsilon(1). CF(0) has three main subunits: a, b and c.

It is found in the cell membrane. In terms of biological role, produces ATP from ADP in the presence of a proton gradient across the membrane. The polypeptide is ATP synthase epsilon chain (Rickettsia africae (strain ESF-5)).